Reading from the N-terminus, the 130-residue chain is Small ribosomal subunit protein uS8 (130 aa).

This sequence belongs to the universal ribosomal protein uS8 family. In terms of assembly, part of the 30S ribosomal subunit. Contacts proteins S5 and S12.

Functionally, one of the primary rRNA binding proteins, it binds directly to 16S rRNA central domain where it helps coordinate assembly of the platform of the 30S subunit. The chain is Small ribosomal subunit protein uS8 from Pseudomonas fluorescens (strain Pf0-1).